The following is a 557-amino-acid chain: 6-methylpretetramide 4-monooxygenase (557 aa).

Residues Gln9 to Arg38 and Met278 to Asp288 contribute to the FAD site. The tract at residues Leu530–Glu557 is disordered.

This sequence belongs to the PheA/TfdB FAD monooxygenase family. It depends on FAD as a cofactor.

It catalyses the reaction 6-methylpretetramide + NADPH + O2 + 2 H(+) = 4-hydroxy-6-methylpretetramide + NADP(+) + H2O. It carries out the reaction 4-hydroxy-6-methylpretetramide + NADPH + O2 = 4-dedimethylamino-4-oxo-anhydrotetracycline + NADP(+) + H2O. The protein operates within antibiotic biosynthesis; oxytetracycline biosynthesis. In terms of biological role, involved in the biosynthesis of the tetracycline antibiotic, oxytetracycline. Catalyzes the double hydroxylation of 6-methylpretetramide to yield 4-keto-anhydrotetracycline, via the insertion of oxygen atoms at the C-12a and C-4 positions of 6-pretetramid. This Streptomyces rimosus protein is 6-methylpretetramide 4-monooxygenase.